The sequence spans 448 residues: Probable glycine dehydrogenase (decarboxylating) subunit 1 (448 aa).

Belongs to the GcvP family. N-terminal subunit subfamily. In terms of assembly, the glycine cleavage system is composed of four proteins: P, T, L and H. In this organism, the P 'protein' is a heterodimer of two subunits.

It catalyses the reaction N(6)-[(R)-lipoyl]-L-lysyl-[glycine-cleavage complex H protein] + glycine + H(+) = N(6)-[(R)-S(8)-aminomethyldihydrolipoyl]-L-lysyl-[glycine-cleavage complex H protein] + CO2. Its function is as follows. The glycine cleavage system catalyzes the degradation of glycine. The P protein binds the alpha-amino group of glycine through its pyridoxal phosphate cofactor; CO(2) is released and the remaining methylamine moiety is then transferred to the lipoamide cofactor of the H protein. This chain is Probable glycine dehydrogenase (decarboxylating) subunit 1, found in Bacillus velezensis (strain DSM 23117 / BGSC 10A6 / LMG 26770 / FZB42) (Bacillus amyloliquefaciens subsp. plantarum).